Consider the following 412-residue polypeptide: Subtilisin-like protease 6 (412 aa).

The first 20 residues, 1–20 (MGFITKAIPIVLAALSTVNG), serve as a signal peptide directing secretion. A propeptide spanning residues 21–127 (ARILEAGPHA…VRATTNGTNL (107 aa)) is cleaved from the precursor. Residues 36-120 (KYIVVMKKDV…FIEPDFVVRA (85 aa)) enclose the Inhibitor I9 domain. N-linked (GlcNAc...) asparagine glycans are attached at residues asparagine 123 and asparagine 126. One can recognise a Peptidase S8 domain in the interval 135–412 (SWGLARVSTR…SKLIYNGSGK (278 aa)). Active-site charge relay system residues include aspartate 167 and histidine 198. N-linked (GlcNAc...) asparagine glycosylation is found at asparagine 252, asparagine 264, and asparagine 325. The active-site Charge relay system is serine 358. A glycan (N-linked (GlcNAc...) asparagine) is linked at asparagine 408.

The protein belongs to the peptidase S8 family.

The protein resides in the secreted. In terms of biological role, secreted subtilisin-like serine protease with keratinolytic activity that contributes to pathogenicity. In Trichophyton verrucosum (Cattle ringworm fungus), this protein is Subtilisin-like protease 6 (SUB6).